Here is a 366-residue protein sequence, read N- to C-terminus: Terpene cyclase-like protein flvF (366 aa).

This sequence belongs to the terpene synthase family. Homodimer.

The catalysed reaction is N,N-dimethyl-cadaverine + 2,6,9-trimethyl-13-oxatetracyclo[6.3.1.1(6,9).0(1,5)]tridecane carbocation = pre-flavunoidine + H(+). It participates in secondary metabolite biosynthesis; terpenoid biosynthesis. Terpene cyclase-like protein; part of the gene cluster that mediates the biosynthesis of flavunoidine, an alkaloidal terpenoid with a tetracyclic cage-like core connected to dimethylcadaverine via a C-N bond and acylated with 5,5-dimethyl-L-pipecolate. The tetracyclic core is synthesized by the terpene cyclase flvE and the cytochrome P450 monooxygenase flvD. The terpene cyclase flvE catalyzes the cyclization of farnesyl pyrophosphate (FPP) to form (1R,4R,5S)-(+)-acoradiene and the cytochrome P450 monooxygenase flvD is then responsible for oxidative conversion of (1R,4R,5S)-(+)-acoradiene into the tetracyclic cage present in the final product flavunoidine. In parallel, the N-methyltransferase flvH dimethylates L-lysine to give N,N-dimethyl-L-Lysin which is decarboxylated by flvG to afford dimethylcadaverine. The terpene cyclase-like protein flvF is the enzyme that attaches the dimethylcadaverine precusor at the C-7 of the tetracyclic cage to yield pre-flavunoidine. The cytochrome monooxygenase flvC hydroxylates the C-10 position of pre-flavunoidine whereas the NRPS flvI acylates the terpenoid core at the hydroxylated C-10 with dimethylpipecolate to yield final flavunoidine. The bifunctional enzyme flvA and the dehydrogenase flvB are responsible for the synthesis of the dimethylpipecolate precursor. The PLP-dependent lyase domain of flvA might use L-O-acetyl-homoserine and alpha-keto-isovalerate to form an intermediary ketone that can cyclize intramolecularly to yield an imine. The imine can be reduced by flvB to yield the 6-carboxylated pipecolate. The C-terminal alpha-KG-dependent oxygenase domain of flvA is then proposed to catalyze the decarboxylation to yield dimethylpipecolate. This chain is Terpene cyclase-like protein flvF, found in Aspergillus flavus (strain ATCC 200026 / FGSC A1120 / IAM 13836 / NRRL 3357 / JCM 12722 / SRRC 167).